We begin with the raw amino-acid sequence, 253 residues long: Porin thermoregulatory protein EnvY (253 aa).

The HTH araC/xylS-type domain maps to 149–246; that stretch reads DSVCRIIQSD…GLTPLNYLAK (98 aa). DNA-binding regions (H-T-H motif) lie at residues 166–187 and 213–236; these read RIVA…KNEN and ITQV…KAFY.

Its function is as follows. Influences the temperature-dependent expression of several E.coli envelope proteins, most notably the porins OmpF and OmpC and the lambda receptor, LamB. The sequence is that of Porin thermoregulatory protein EnvY (envY) from Escherichia coli (strain K12).